The sequence spans 577 residues: Adenine deaminase (577 aa).

The protein belongs to the metallo-dependent hydrolases superfamily. Adenine deaminase family. The cofactor is Mn(2+).

It catalyses the reaction adenine + H2O + H(+) = hypoxanthine + NH4(+). The chain is Adenine deaminase from Kosmotoga olearia (strain ATCC BAA-1733 / DSM 21960 / TBF 19.5.1).